Consider the following 363-residue polypeptide: Protein EXORDIUM-like 5 (363 aa).

Positions 1–25 (MSSPATTITFFFFFTLSSFFYITSS) are cleaved as a signal peptide. Asn144 carries N-linked (GlcNAc...) asparagine glycosylation.

This sequence belongs to the EXORDIUM family.

It is found in the secreted. It localises to the extracellular space. Its subcellular location is the apoplast. Functionally, may play a role in a brassinosteroid-dependent regulation of growth and development. This chain is Protein EXORDIUM-like 5 (EXL5), found in Arabidopsis thaliana (Mouse-ear cress).